The primary structure comprises 274 residues: Acetyl-coenzyme A carboxylase carboxyl transferase subunit beta (274 aa).

The region spanning 16 to 274 (LWTKCEECKN…LLNLLFYKNA (259 aa)) is the CoA carboxyltransferase N-terminal domain. Residues C20, C23, C39, and C42 each coordinate Zn(2+). Residues 20–42 (CEECKNILLAQELETNFYVCPKC) form a C4-type zinc finger.

This sequence belongs to the AccD/PCCB family. Acetyl-CoA carboxylase is a heterohexamer composed of biotin carboxyl carrier protein (AccB), biotin carboxylase (AccC) and two subunits each of ACCase subunit alpha (AccA) and ACCase subunit beta (AccD). Zn(2+) is required as a cofactor.

Its subcellular location is the cytoplasm. It catalyses the reaction N(6)-carboxybiotinyl-L-lysyl-[protein] + acetyl-CoA = N(6)-biotinyl-L-lysyl-[protein] + malonyl-CoA. Its pathway is lipid metabolism; malonyl-CoA biosynthesis; malonyl-CoA from acetyl-CoA: step 1/1. In terms of biological role, component of the acetyl coenzyme A carboxylase (ACC) complex. Biotin carboxylase (BC) catalyzes the carboxylation of biotin on its carrier protein (BCCP) and then the CO(2) group is transferred by the transcarboxylase to acetyl-CoA to form malonyl-CoA. This Hydrogenobaculum sp. (strain Y04AAS1) protein is Acetyl-coenzyme A carboxylase carboxyl transferase subunit beta.